A 286-amino-acid polypeptide reads, in one-letter code: Bifunctional protein FolD (286 aa).

NADP(+)-binding positions include 165–167 (GRS) and serine 190.

The protein belongs to the tetrahydrofolate dehydrogenase/cyclohydrolase family. As to quaternary structure, homodimer.

The enzyme catalyses (6R)-5,10-methylene-5,6,7,8-tetrahydrofolate + NADP(+) = (6R)-5,10-methenyltetrahydrofolate + NADPH. It carries out the reaction (6R)-5,10-methenyltetrahydrofolate + H2O = (6R)-10-formyltetrahydrofolate + H(+). Its pathway is one-carbon metabolism; tetrahydrofolate interconversion. Functionally, catalyzes the oxidation of 5,10-methylenetetrahydrofolate to 5,10-methenyltetrahydrofolate and then the hydrolysis of 5,10-methenyltetrahydrofolate to 10-formyltetrahydrofolate. This is Bifunctional protein FolD from Burkholderia lata (strain ATCC 17760 / DSM 23089 / LMG 22485 / NCIMB 9086 / R18194 / 383).